The primary structure comprises 77 residues: MNTRYATCYVCDELVYLFKKTFSNMSPSAAAFYQRRMAIVKNGIVLCPRCSSELKIGNGVSIPIYPHRAQQHARRSR.

Plays a role in the production of occlusion bodies as well as expression of the polyhedrin gene. The sequence is that of Protein AC43 from Autographa californica nuclear polyhedrosis virus (AcMNPV).